Here is a 356-residue protein sequence, read N- to C-terminus: Holliday junction branch migration complex subunit RuvB (356 aa).

Positions 13–197 (LPPARRMLSA…FGIVARLEFY (185 aa)) are large ATPase domain (RuvB-L). ATP contacts are provided by residues L36, R37, G78, K81, T82, T83, 144–146 (EDY), R187, Y197, and R234. T82 is a binding site for Mg(2+). Residues 198 to 268 (TPEELARIVK…IANRALAMLD (71 aa)) form a small ATPAse domain (RuvB-S) region. Residues 271 to 356 (PQGFDLMDRK…RGNAENLFEE (86 aa)) form a head domain (RuvB-H) region. DNA-binding residues include R326 and R331.

The protein belongs to the RuvB family. In terms of assembly, homohexamer. Forms an RuvA(8)-RuvB(12)-Holliday junction (HJ) complex. HJ DNA is sandwiched between 2 RuvA tetramers; dsDNA enters through RuvA and exits via RuvB. An RuvB hexamer assembles on each DNA strand where it exits the tetramer. Each RuvB hexamer is contacted by two RuvA subunits (via domain III) on 2 adjacent RuvB subunits; this complex drives branch migration. In the full resolvosome a probable DNA-RuvA(4)-RuvB(12)-RuvC(2) complex forms which resolves the HJ.

It is found in the cytoplasm. The enzyme catalyses ATP + H2O = ADP + phosphate + H(+). Its function is as follows. The RuvA-RuvB-RuvC complex processes Holliday junction (HJ) DNA during genetic recombination and DNA repair, while the RuvA-RuvB complex plays an important role in the rescue of blocked DNA replication forks via replication fork reversal (RFR). RuvA specifically binds to HJ cruciform DNA, conferring on it an open structure. The RuvB hexamer acts as an ATP-dependent pump, pulling dsDNA into and through the RuvAB complex. RuvB forms 2 homohexamers on either side of HJ DNA bound by 1 or 2 RuvA tetramers; 4 subunits per hexamer contact DNA at a time. Coordinated motions by a converter formed by DNA-disengaged RuvB subunits stimulates ATP hydrolysis and nucleotide exchange. Immobilization of the converter enables RuvB to convert the ATP-contained energy into a lever motion, pulling 2 nucleotides of DNA out of the RuvA tetramer per ATP hydrolyzed, thus driving DNA branch migration. The RuvB motors rotate together with the DNA substrate, which together with the progressing nucleotide cycle form the mechanistic basis for DNA recombination by continuous HJ branch migration. Branch migration allows RuvC to scan DNA until it finds its consensus sequence, where it cleaves and resolves cruciform DNA. This chain is Holliday junction branch migration complex subunit RuvB, found in Polaromonas naphthalenivorans (strain CJ2).